The following is a 407-amino-acid chain: Ribosomal protein uL3-like (407 aa).

The span at 1-31 (MSHRKFSAPRHGHLGFLPHKRSHRHRGKVKT) shows a compositional bias: basic residues. Disordered regions lie at residues 1 to 35 (MSHR…WPRD) and 387 to 407 (AFMG…SGDL).

Belongs to the universal ribosomal protein uL3 family. In terms of assembly, component of the large ribosomal subunit in striated muscle cells.

Heart- and skeletal muscle-specific component of the ribosome, which regulates muscle function. Component of the large ribosomal subunit in striated muscle cells: replaces the RPL3 paralog in the ribosome in these cells. The ribosome is a large ribonucleoprotein complex responsible for the synthesis of proteins in the cell. Inhibits myotube growth and muscle function. This is Ribosomal protein uL3-like from Homo sapiens (Human).